We begin with the raw amino-acid sequence, 102 residues long: Small ribosomal subunit protein uS10 (102 aa).

Belongs to the universal ribosomal protein uS10 family. Part of the 30S ribosomal subunit.

Functionally, involved in the binding of tRNA to the ribosomes. This is Small ribosomal subunit protein uS10 from Methylobacillus flagellatus (strain ATCC 51484 / DSM 6875 / VKM B-1610 / KT).